A 294-amino-acid chain; its full sequence is Endonuclease G, mitochondrial (294 aa).

Residues 1–44 (MRALRAGLTLALGAGLGAAAEHWRRREGKAPGLLGRVPLLPVVA) constitute a mitochondrion transit peptide. T125 is subject to Phosphothreonine. H138 (proton acceptor) is an active-site residue. Residue N169 participates in Mg(2+) binding. Positions 283–293 (AGNLKAITAGS) are essential for deoxyribonuclease activity.

Belongs to the DNA/RNA non-specific endonuclease family. Homodimer; disulfide-linked. Homodimerization is essential for its activity. Interacts with YWHAG. Mg(2+) is required as a cofactor. In terms of processing, GSK3-beta-mediated phosphorylation at Thr-125 is necessary for its interaction with YWHAG and the induction of autophagy.

Its subcellular location is the mitochondrion. In terms of biological role, endonuclease that preferentially catalyzes the cleavage of double-stranded 5-hydroxymethylcytosine (5hmC)-modified DNA. The 5hmC-modified nucleotide does not increase the binding affinity, but instead increases the efficiency of cutting and specifies the site of cleavage for the modified DNAs. Shows significantly higher affinity for four-stranded Holliday junction over duplex and single-stranded DNAs. Promotes conservative recombination when the DNA is 5hmC-modified. Promotes autophagy through the suppression of mTOR by its phosphorylation-mediated interaction with YWHAG and its endonuclease activity-mediated DNA damage response. GSK3-beta mediated phosphorylation of ENDOG enhances its interaction with YWHAG, leading to the release of TSC2 and PIK3C3 from YWHAG resulting in mTOR pathway suppression and autophagy initiation. Promotes cleavage of mtDNA in response to oxidative and nitrosative stress, in turn inducing compensatory mtDNA replication. The protein is Endonuclease G, mitochondrial (Endog) of Mus musculus (Mouse).